The chain runs to 387 residues: Chaperone protein DnaJ (387 aa).

In terms of domain architecture, J spans 4-68 (DFYDVLGVSR…EKRQMYDQLG (65 aa)). The interval 76-135 (EKRGGVGGGGNSSGGSARGDPFGGMGGQGSPFGDIFEQFFGGGQGQRRQGNRPRQGQNLQ) is disordered. Residues 80-105 (GVGGGGNSSGGSARGDPFGGMGGQGS) are compositionally biased toward gly residues. Low complexity predominate over residues 121–133 (QRRQGNRPRQGQN). A CR-type zinc finger spans residues 148–230 (GVEKQFTVRR…CNGDGVTRQE (83 aa)). Residues Cys-161, Cys-164, Cys-178, Cys-181, Cys-204, Cys-207, Cys-218, and Cys-221 each coordinate Zn(2+). CXXCXGXG motif repeat units follow at residues 161 to 168 (CPDCNGRG), 178 to 185 (CPQCNGQG), 204 to 211 (CPRCDGSG), and 218 to 225 (CSTCNGDG).

The protein belongs to the DnaJ family. Homodimer. Zn(2+) serves as cofactor.

The protein resides in the cytoplasm. In terms of biological role, participates actively in the response to hyperosmotic and heat shock by preventing the aggregation of stress-denatured proteins and by disaggregating proteins, also in an autonomous, DnaK-independent fashion. Unfolded proteins bind initially to DnaJ; upon interaction with the DnaJ-bound protein, DnaK hydrolyzes its bound ATP, resulting in the formation of a stable complex. GrpE releases ADP from DnaK; ATP binding to DnaK triggers the release of the substrate protein, thus completing the reaction cycle. Several rounds of ATP-dependent interactions between DnaJ, DnaK and GrpE are required for fully efficient folding. Also involved, together with DnaK and GrpE, in the DNA replication of plasmids through activation of initiation proteins. This Haloquadratum walsbyi (strain DSM 16790 / HBSQ001) protein is Chaperone protein DnaJ.